Consider the following 261-residue polypeptide: MAGDSETHLKDRAENGHAVRQPFLIGVSGGTASGKSSVCEKIMELLGQNKIDRHQRQVVILSQDSFYRELTPEQKAKAVKGQFNFDHPDAFDSELIMKTLRDIIQGKTVHIPVYDFVTHSRKDEFLTLYPADVVLFEGILMFYSQEIRDLFKMKLFVDTDPDTRLSRRVLRDISERGRELEQVLNQYITFVKPAFEEFCLPTKKYADVIIPRGADNLVAINLIVQHIQDILNGGFTKRQNGFQNGHGTPRQRRTSESSRPH.

29–37 (GGTASGKSS) contacts ATP. Residues aspartate 86, tyrosine 114, histidine 119, arginine 168, arginine 178, and glutamine 186 each contribute to the substrate site. Aspartate 215 contacts ATP. Positions 238-261 (RQNGFQNGHGTPRQRRTSESSRPH) are disordered.

Belongs to the uridine kinase family. As to quaternary structure, homotetramer.

The catalysed reaction is uridine + ATP = UMP + ADP + H(+). It carries out the reaction cytidine + ATP = CMP + ADP + H(+). It functions in the pathway pyrimidine metabolism; CTP biosynthesis via salvage pathway; CTP from cytidine: step 1/3. Its pathway is pyrimidine metabolism; UMP biosynthesis via salvage pathway; UMP from uridine: step 1/1. Its function is as follows. Phosphorylates uridine and cytidine to uridine monophosphate and cytidine monophosphate. Does not phosphorylate deoxyribonucleosides or purine ribonucleosides. Can use ATP or GTP as a phosphate donor. The polypeptide is Uridine-cytidine kinase 2-B (uck2b) (Danio rerio (Zebrafish)).